The sequence spans 149 residues: Decarboxylase AgnL1 (149 aa).

The region spanning 30–125 (PGMSEEDYRH…VGDHEKFADT (96 aa)) is the EthD domain.

Belongs to the tpcK family.

It catalyses the reaction atrochrysone carboxylate + H(+) = atrochrysone + CO2. Its pathway is secondary metabolite biosynthesis. Functionally, decarboxylase; part of the gene cluster that mediates the biosynthesis of agnestins, dihydroxy-xanthone metabolites. The pathway begins with the assembly and cyclization of atrochrysone thioester by the non-reducing polyketide synthase Agnpks1. The atrochrysone carboxyl ACP thioesterase AgnL7 then breaks the thioester bond and releases the atrochrysone carboxylic acid as the first enzyme-free intermediate. The decarboxylase AgnL1 then catalyzes the concerted decarboxylation-elimination required to convert atochrysone carboxylic acid into emodin anthrone, which is further oxidized to emodin by the anthrone oxygenase AgnL2. Emodin then undergoes reduction catalyzed by the oxidoreductase AgnL4 to yield the dihydroquinone tautomer which is the substrate for reduction by the short chain dehydrogenase AgnL6 reduction to produce hydroxyketone, followed by AgnL8 dehydration and likely spontaneous autoxidation to chrysophanol. Baeyer-Villiger oxidation by the oxidase AgnL3 leads to monodictyphenone via cleavage of the C-10/C-10a bond of chrysophanol. Alternative cleavage at the C-4a/C-10 bond of chrysophanol also leads to the formation some cephalone F. Further conversion to agnestins A and B, requires reduction to dihydro-monodictyphenone, oxidation to agnestin C probably via an epoxide, and rearrangement to either agnestin A or agnestin B directly, although agnestin A or agnestin B can also interconvert. Within the cluster, AgnR1 is the only unassigned oxidoreductase present which could be involved in this conversion. However, AgnR1 seems not to be involved in this step, and thus genes involved in the proposed oxidation/reduction may be located elsewhere on the genome. Further agnestin A derivatives are probably formed by spontaneous decarboxylations, dehydrations and methanolysis reactions. The protein is Decarboxylase AgnL1 of Paecilomyces divaricatus (Penicillium divaricatum).